A 606-amino-acid chain; its full sequence is Leucine-rich repeat and immunoglobulin-like domain-containing nogo receptor-interacting protein 1 (606 aa).

The first 27 residues, 1-27, serve as a signal peptide directing secretion; it reads MILQLPSCLCPILLIVVGSILSGSASG. Disulfide bonds link Cys28/Cys34 and Cys32/Cys43. In terms of domain architecture, LRRNT spans 28–57; the sequence is CPQRCDCSPQDRSVLCHRKRYLDVPEGIPT. Over 28 to 547 the chain is Extracellular; that stretch reads CPQRCDCSPQ…FDIKTLIIAT (520 aa). 11 LRR repeats span residues 58–79, 82–103, 106–127, 130–151, 154–175, 178–199, 202–223, 250–271, 274–295, 298–319, and 322–343; these read DTRL…EFSA, YLEE…AFNG, NLRS…VFTG, NLTQ…MFQD, NLKS…AFRG, SLEE…ALSH, GLIT…SFKR, NLTS…AIRH, YLRF…MLYE, RLQE…AFRG, and HLKV…SFHS. A glycan (N-linked (GlcNAc...) asparagine) is linked at Asn130. The N-linked (GlcNAc...) asparagine glycan is linked to Asn188. Asn250, Asn260, and Asn279 each carry an N-linked (GlcNAc...) asparagine glycan. N-linked (GlcNAc...) asparagine glycosylation is found at Asn327, Asn374, Asn478, Asn491, Asn512, Asn523, and Asn528. In terms of domain architecture, LRRCT spans 355 to 409; that stretch reads NPLACDCRLLWIFRRRWRLNFSRQQPSCSSPEYVQGKEFKDFPDVLQPNYFTCRR. Cystine bridges form between Cys359/Cys382, Cys361/Cys407, and Cys432/Cys483. An Ig-like C2-type domain is found at 397 to 496; the sequence is PDVLQPNYFT…NAGGNDTSLA (100 aa). A helical transmembrane segment spans residues 548 to 568; that stretch reads TMGFISFLGVVLFCLVLLFLW. The Cytoplasmic portion of the chain corresponds to 569–606; the sequence is SRGKGNTKHNIEIEYVPRKSDAGLSSADAPRKFNMKMI.

The protein resides in the cell membrane. Its function is as follows. May play a role in regulating axonal regeneration and plasticity in the adult central nervous system. The protein is Leucine-rich repeat and immunoglobulin-like domain-containing nogo receptor-interacting protein 1 (lingo1) of Xenopus tropicalis (Western clawed frog).